We begin with the raw amino-acid sequence, 126 residues long: C-type natriuretic peptide 1 (126 aa).

The signal sequence occupies residues 1 to 22 (MLCPALLCAALLLLTPVEITDA). Residues 23 to 104 (RALQQPSDAA…KRAEPDRSRR (82 aa)) constitute a propeptide that is removed on maturation. Cysteine 110 and cysteine 126 are disulfide-bonded.

It belongs to the natriuretic peptide family.

It localises to the secreted. Functionally, exhibits natriuretic and vasodepressant activity. Has cGMP-stimulating activity. May help to regulate body fluid homeostasis in a variety of aquatic environments. The sequence is that of C-type natriuretic peptide 1 from Takifugu rubripes (Japanese pufferfish).